A 433-amino-acid polypeptide reads, in one-letter code: GPI mannosyltransferase 2 (433 aa).

Position 1 (methionine 1) is a topological domain, cytoplasmic. The helical transmembrane segment at 2-22 (IVGLTLYFVLFRSIQYLLVFL) threads the bilayer. Topologically, residues 23 to 109 (TPIRQFDTST…NNDSIYHALR (87 aa)) are lumenal. Asparagine 69 and asparagine 101 each carry an N-linked (GlcNAc...) asparagine glycan. A helical transmembrane segment spans residues 110–130 (VGVAIENVLFYLSGIVLYFLT). Residues 131–161 (KKIFSQNIRQSQFARTIAKKTSLLFFLTSAA) are Cytoplasmic-facing. Residues 162-182 (GFLTSIYSEPLSFFFAFVGIW) traverse the membrane as a helical segment. The Lumenal portion of the chain corresponds to 183-215 (SRECSISVPVLGQFDISWRYWFPYSFISMACFT). A helical transmembrane segment spans residues 216–236 (LASLNRSNCVLLGIYFIFDLI). At 237–243 (ELTKNRK) the chain is on the cytoplasmic side. A helical membrane pass occupies residues 244 to 264 (FVKAICFPLLSGSLMFSALLY). At 265–318 (QQYYLPYKTFCPQRGEWCKSQLFSSIFITKTSLYSYIQSHYWGVGLLKYWTPNN) the chain is on the lumenal side. The chain crosses the membrane as a helical span at residues 319 to 339 (IPNFLFAVPNIIILIYSSIYF). The Cytoplasmic portion of the chain corresponds to 340 to 350 (SKIYPSYNLKA). A helical membrane pass occupies residues 351 to 371 (LVWITRALVVIVCFFAHVQIL). Topologically, residues 372–409 (NRIASFLPLHLWYLADRLVKTSDPKKMENPKGDDKIVK) are lumenal. The chain crosses the membrane as a helical span at residues 410 to 430 (FYIYWLAFWIPLQTILFAAFL). Residues 431-433 (PPA) lie on the Cytoplasmic side of the membrane.

Belongs to the PIGV family. As to quaternary structure, part of the GPI mannosyltransferase 2 complex composed of GPI18 and PGA1.

The protein resides in the endoplasmic reticulum membrane. The protein operates within glycolipid biosynthesis; glycosylphosphatidylinositol-anchor biosynthesis. Functionally, mannosyltransferase involved in glycosylphosphatidylinositol-anchor biosynthesis. Responsible for the transfer of the second mannose to the glycosylphosphatidylinositol during GPI precursor assembly. This is GPI mannosyltransferase 2 (GPI18) from Saccharomyces cerevisiae (strain ATCC 204508 / S288c) (Baker's yeast).